A 276-amino-acid chain; its full sequence is Phosphate import ATP-binding protein PstB 2 (276 aa).

An ABC transporter domain is found at M22–V262. G54–T61 is a binding site for ATP.

Belongs to the ABC transporter superfamily. Phosphate importer (TC 3.A.1.7) family. As to quaternary structure, the complex is composed of two ATP-binding proteins (PstB), two transmembrane proteins (PstC and PstA) and a solute-binding protein (PstS).

The protein localises to the cell membrane. It catalyses the reaction phosphate(out) + ATP + H2O = ADP + 2 phosphate(in) + H(+). In terms of biological role, part of the ABC transporter complex PstSACB involved in phosphate import. Responsible for energy coupling to the transport system. The polypeptide is Phosphate import ATP-binding protein PstB 2 (Mycobacterium bovis (strain ATCC BAA-935 / AF2122/97)).